A 134-amino-acid polypeptide reads, in one-letter code: Probable glycine cleavage system H protein (134 aa).

Residues 29 to 110 (TVLVGITDYA…PYENWIAKLK (82 aa)) form the Lipoyl-binding domain. N6-lipoyllysine is present on Lys-70.

This sequence belongs to the GcvH family. In terms of assembly, the glycine cleavage system is composed of four proteins: P, T, L and H. (R)-lipoate serves as cofactor.

The glycine cleavage system catalyzes the degradation of glycine. The H protein shuttles the methylamine group of glycine from the P protein to the T protein. The polypeptide is Probable glycine cleavage system H protein (Thermococcus gammatolerans (strain DSM 15229 / JCM 11827 / EJ3)).